The following is an 86-amino-acid chain: Putative defensin-like protein 189 (86 aa).

The N-terminal stretch at 1–28 (MKMAKSANEIGFITCLVVFLVLTGQSNG) is a signal peptide. Intrachain disulfides connect cysteine 39–cysteine 85, cysteine 52–cysteine 71, cysteine 57–cysteine 80, and cysteine 61–cysteine 82.

The protein belongs to the DEFL family.

The protein localises to the secreted. In Arabidopsis thaliana (Mouse-ear cress), this protein is Putative defensin-like protein 189.